We begin with the raw amino-acid sequence, 1054 residues long: Leucine-rich repeats and immunoglobulin-like domains protein 2 (1054 aa).

An N-terminal signal peptide occupies residues 1–39 (MAAAPRGIWEQRRLGCGLGPLARLLILAQALRLLPAARA). One can recognise an LRRNT domain in the interval 40-74 (GLCPAPCACRLPLLDCSRRKLPAPSWRALSGPLPS). LRR repeat units follow at residues 75-96 (DISSLDLSHNRLSNWNNTLESQ), 97-118 (TLQEVKMNYNELTEIPYFGEPT), 120-141 (NITLLSLVHNLIPEINAEAFEL), 144-165 (ALESLDLSSNIISEIKTSSFPR), 167-188 (SLKYLNLSNNRISTLEAGCFDN), 192-213 (SLLVVKLNRNRISMIPPKVFKL), 215-236 (HLQFLELKRNRIKIVEGLTFQG), 239-260 (SLRSLKMQRNGISKLKDGAFFG), 263-284 (NMEELELEHNNLTGVNKGWLYG), 287-308 (MLQQLYMSQNAIEKISPDAWEF), 311-332 (RLSELDLSYNQLTRLDESAFVG), 335-356 (LLERLNLGDNRVTHIADGVFRF), 359-381 (NLQTLDLRNNDISWAIEDASEAF), 386-407 (SLTKLILQGNRIKSVTQKAFIG), and 410-431 (SLEYLDLNNNAIMSIQENAFSQ). The N-linked (GlcNAc...) asparagine glycan is linked to Asn90. An N-linked (GlcNAc...) asparagine glycan is attached at Asn120. 2 N-linked (GlcNAc...) asparagine glycosylation sites follow: Asn172 and Asn188. Asn273 is a glycosylation site (N-linked (GlcNAc...) asparagine). Asn440, Asn467, Asn513, Asn570, and Asn588 each carry an N-linked (GlcNAc...) asparagine glycan. An LRRCT domain is found at 442 to 493 (SSLLCDCHLKWLLQWLVDNNFHHSVNVSCAHPEWLAGQSILNVDLKDFVCDD). 3 Ig-like C2-type domains span residues 497–596 (PQIR…AKLT), 601–690 (PSFL…ASLT), and 695–784 (PSFI…NVIS). An intrachain disulfide couples Cys518 to Cys579. Cys622 and Cys674 are oxidised to a cystine. N-linked (GlcNAc...) asparagine glycosylation is found at Asn686 and Asn727. A disulfide bridge links Cys716 with Cys765. Residues 807 to 827 (IVIIVVVCCVVGTSLIWVIVI) form a helical membrane-spanning segment. Phosphotyrosine is present on Tyr905. A glycan (N-linked (GlcNAc...) asparagine) is linked at Asn1024.

The protein localises to the cell membrane. The protein resides in the cytoplasm. This chain is Leucine-rich repeats and immunoglobulin-like domains protein 2 (Lrig2), found in Mus musculus (Mouse).